The chain runs to 346 residues: Pyrophosphate--fructose 6-phosphate 1-phosphotransferase (346 aa).

Glycine 13 lines the diphosphate pocket. Glutamate 105 contributes to the Mg(2+) binding site. Substrate is bound by residues 127–129 (TID), arginine 164, 171–173 (MGR), glutamate 224, arginine 269, and 275–278 (HLQR). Aspartate 129 serves as the catalytic Proton acceptor.

The protein belongs to the phosphofructokinase type A (PFKA) family. Mixed-substrate PFK group III subfamily. In terms of assembly, homodimer. The cofactor is Mg(2+).

It localises to the cytoplasm. The enzyme catalyses beta-D-fructose 6-phosphate + diphosphate = beta-D-fructose 1,6-bisphosphate + phosphate + H(+). It functions in the pathway carbohydrate degradation; glycolysis; D-glyceraldehyde 3-phosphate and glycerone phosphate from D-glucose: step 3/4. Its activity is regulated as follows. Non-allosteric. Catalyzes the phosphorylation of D-fructose 6-phosphate, the first committing step of glycolysis. Uses inorganic phosphate (PPi) as phosphoryl donor instead of ATP like common ATP-dependent phosphofructokinases (ATP-PFKs), which renders the reaction reversible, and can thus function both in glycolysis and gluconeogenesis. Consistently, PPi-PFK can replace the enzymes of both the forward (ATP-PFK) and reverse (fructose-bisphosphatase (FBPase)) reactions. The protein is Pyrophosphate--fructose 6-phosphate 1-phosphotransferase of Dictyoglomus thermophilum.